A 347-amino-acid polypeptide reads, in one-letter code: NADH-ubiquinone oxidoreductase chain 2 (347 aa).

10 helical membrane-spanning segments follow: residues 3–23 (PPIL…VMLS), 25–45 (HWLL…PILM), 66–86 (ASML…QWVI), 111–131 (FHFW…MILL), 149–169 (INTN…GWGG), 178–198 (IMAY…TYNP), 201–221 (MVLN…LFML), 237–257 (FPLI…LPPL), 274–294 (NMII…YFYL), and 325–345 (LLPP…MLSV).

Belongs to the complex I subunit 2 family. Core subunit of respiratory chain NADH dehydrogenase (Complex I) which is composed of 45 different subunits. Interacts with TMEM242.

It is found in the mitochondrion inner membrane. The enzyme catalyses a ubiquinone + NADH + 5 H(+)(in) = a ubiquinol + NAD(+) + 4 H(+)(out). Functionally, core subunit of the mitochondrial membrane respiratory chain NADH dehydrogenase (Complex I) which catalyzes electron transfer from NADH through the respiratory chain, using ubiquinone as an electron acceptor. Essential for the catalytic activity and assembly of complex I. This chain is NADH-ubiquinone oxidoreductase chain 2, found in Canis lupus familiaris (Dog).